Consider the following 272-residue polypeptide: Phosphate import ATP-binding protein PstB 1 (272 aa).

One can recognise an ABC transporter domain in the interval 26 to 267 (ITIENLDLHY…PMKKQTEDYI (242 aa)). Residue 58–65 (GPSGCGKS) coordinates ATP.

This sequence belongs to the ABC transporter superfamily. Phosphate importer (TC 3.A.1.7) family. In terms of assembly, the complex is composed of two ATP-binding proteins (PstB), two transmembrane proteins (PstC and PstA) and a solute-binding protein (PstS).

It localises to the cell inner membrane. It catalyses the reaction phosphate(out) + ATP + H2O = ADP + 2 phosphate(in) + H(+). Functionally, part of the ABC transporter complex PstSACB involved in phosphate import. Responsible for energy coupling to the transport system. The sequence is that of Phosphate import ATP-binding protein PstB 1 from Vibrio vulnificus (strain YJ016).